We begin with the raw amino-acid sequence, 488 residues long: Cobyric acid synthase (488 aa).

One can recognise a GATase cobBQ-type domain in the interval 252–440 (VPLIAVLRFP…VHGLFANDRQ (189 aa)). Catalysis depends on C334, which acts as the Nucleophile. H432 is an active-site residue.

This sequence belongs to the CobB/CobQ family. CobQ subfamily.

Its pathway is cofactor biosynthesis; adenosylcobalamin biosynthesis. In terms of biological role, catalyzes amidations at positions B, D, E, and G on adenosylcobyrinic A,C-diamide. NH(2) groups are provided by glutamine, and one molecule of ATP is hydrogenolyzed for each amidation. This is Cobyric acid synthase from Methylorubrum populi (strain ATCC BAA-705 / NCIMB 13946 / BJ001) (Methylobacterium populi).